Here is a 258-residue protein sequence, read N- to C-terminus: 5'-nucleotidase SurE (258 aa).

The a divalent metal cation site is built by Asp-9, Asp-10, Ser-40, and Asn-95.

This sequence belongs to the SurE nucleotidase family. Requires a divalent metal cation as cofactor.

The protein localises to the cytoplasm. It catalyses the reaction a ribonucleoside 5'-phosphate + H2O = a ribonucleoside + phosphate. In terms of biological role, nucleotidase that shows phosphatase activity on nucleoside 5'-monophosphates. The sequence is that of 5'-nucleotidase SurE from Nitratiruptor sp. (strain SB155-2).